A 178-amino-acid chain; its full sequence is Translation initiation factor IF-3 (178 aa).

A disordered region spans residues 1 to 20 (MRRPFKAAAPTKDGPRSNRD).

It belongs to the IF-3 family. As to quaternary structure, monomer.

The protein localises to the cytoplasm. Functionally, IF-3 binds to the 30S ribosomal subunit and shifts the equilibrium between 70S ribosomes and their 50S and 30S subunits in favor of the free subunits, thus enhancing the availability of 30S subunits on which protein synthesis initiation begins. This is Translation initiation factor IF-3 from Mesorhizobium japonicum (strain LMG 29417 / CECT 9101 / MAFF 303099) (Mesorhizobium loti (strain MAFF 303099)).